A 347-amino-acid polypeptide reads, in one-letter code: Phenylalanine--tRNA ligase alpha subunit (347 aa).

Glu-261 is a binding site for Mg(2+).

It belongs to the class-II aminoacyl-tRNA synthetase family. Phe-tRNA synthetase alpha subunit type 1 subfamily. As to quaternary structure, tetramer of two alpha and two beta subunits. Mg(2+) serves as cofactor.

The protein localises to the cytoplasm. The catalysed reaction is tRNA(Phe) + L-phenylalanine + ATP = L-phenylalanyl-tRNA(Phe) + AMP + diphosphate + H(+). This Streptococcus equi subsp. zooepidemicus (strain MGCS10565) protein is Phenylalanine--tRNA ligase alpha subunit.